Consider the following 161-residue polypeptide: E3 ubiquitin ligase complex SCF subunit sconC (161 aa).

Residues 102–161 (ILAANYLDIKPLLDIGCKTVANMIKGKSPEEIRKTFNIQNDFTPEEEDQIRRENEWAEDR) are interaction with the F-box domain of F-box proteins.

It belongs to the SKP1 family. As to quaternary structure, component of the SCF (SKP1-CUL1-F-box protein) E3 ubiquitin ligase complexes.

It functions in the pathway protein modification; protein ubiquitination. Functionally, essential component of the SCF (SKP1-CUL1-F-box protein) E3 ubiquitin ligase complexes, which mediate the ubiquitination and subsequent proteasomal degradation of target proteins. Controls sulfur metabolite repression, probably by mediating the inactivation or degradation of the metR transcription factor. The protein is E3 ubiquitin ligase complex SCF subunit sconC (sconC) of Emericella nidulans (strain FGSC A4 / ATCC 38163 / CBS 112.46 / NRRL 194 / M139) (Aspergillus nidulans).